A 561-amino-acid chain; its full sequence is DNA ligase B (561 aa).

The active-site N6-AMP-lysine intermediate is Lys125.

It belongs to the NAD-dependent DNA ligase family. LigB subfamily.

It catalyses the reaction NAD(+) + (deoxyribonucleotide)n-3'-hydroxyl + 5'-phospho-(deoxyribonucleotide)m = (deoxyribonucleotide)n+m + AMP + beta-nicotinamide D-nucleotide.. Functionally, catalyzes the formation of phosphodiester linkages between 5'-phosphoryl and 3'-hydroxyl groups in double-stranded DNA using NAD as a coenzyme and as the energy source for the reaction. This chain is DNA ligase B, found in Salmonella dublin (strain CT_02021853).